We begin with the raw amino-acid sequence, 154 residues long: uncharacterized protein (154 aa).

Residues 1–37 (MDNLKEKPLSYNINNNNLNNNNNNNNNNNNNNNNINN) are disordered. A compositionally biased stretch (low complexity) spans 12-37 (NINNNNLNNNNNNNNNNNNNNNNINN). A glycan (N-linked (GlcNAc...) asparagine) is linked at Asn-82. A helical membrane pass occupies residues 116–136 (IIITTIVVLLMIAVSLGLILA). Asn-149 is a glycosylation site (N-linked (GlcNAc...) asparagine).

The protein localises to the membrane. This is an uncharacterized protein from Dictyostelium discoideum (Social amoeba).